Here is a 395-residue protein sequence, read N- to C-terminus: MTDKIINSGNLEAGYDSVIDKDSKYVMQTYGRQPLVLSKGKGAVVQDIYGKEYIDCVAGIAVNNVGHCHPTVVKAIQAQAEKLIHVSNLYYTEIQAEFAETLASITGMECVFFCNSGAEAVEAAMKLARVATGKSAFVAAEHSFHGRTIGALSVTHKSMYRDPFMPPVSSKTSFVPYSDADAIRKAISEDTAAVVLEPIQGEGGVNVPDPGYLKEVREICDETGTLLIFDEVQTGFGRTGTWFCKEQFGVEPDIMSMAKAIGGGFPMGAIAARSGLSFGRGQHASTFGGGPLACAAALASIQAIKEEKLLERSKEMGAYFTKKLSGMARDDIVEVRGKGLMIGVEIKYPCGKFVDFAREHGVLVNCTSDSVLRLVPPLVITKEQIDSVVDVLEQA.

Pyridoxal 5'-phosphate contacts are provided by residues 117-118 and phenylalanine 144; that span reads GA. A N(2)-acetyl-L-ornithine-binding site is contributed by arginine 147. Pyridoxal 5'-phosphate is bound at residue 230–233; sequence DEVQ. The residue at position 259 (lysine 259) is an N6-(pyridoxal phosphate)lysine. N(2)-acetyl-L-ornithine is bound at residue serine 285. Pyridoxal 5'-phosphate is bound at residue threonine 286.

The protein belongs to the class-III pyridoxal-phosphate-dependent aminotransferase family. ArgD subfamily. Homodimer. Pyridoxal 5'-phosphate is required as a cofactor.

Its subcellular location is the cytoplasm. It carries out the reaction N(2)-acetyl-L-ornithine + 2-oxoglutarate = N-acetyl-L-glutamate 5-semialdehyde + L-glutamate. The protein operates within amino-acid biosynthesis; L-arginine biosynthesis; N(2)-acetyl-L-ornithine from L-glutamate: step 4/4. This chain is Acetylornithine aminotransferase, found in Methanosarcina mazei (strain ATCC BAA-159 / DSM 3647 / Goe1 / Go1 / JCM 11833 / OCM 88) (Methanosarcina frisia).